Reading from the N-terminus, the 137-residue chain is Large ribosomal subunit protein uL16 (137 aa).

Belongs to the universal ribosomal protein uL16 family. In terms of assembly, part of the 50S ribosomal subunit.

In terms of biological role, binds 23S rRNA and is also seen to make contacts with the A and possibly P site tRNAs. This is Large ribosomal subunit protein uL16 from Chlamydia abortus (strain DSM 27085 / S26/3) (Chlamydophila abortus).